We begin with the raw amino-acid sequence, 314 residues long: Lipoyl synthase (314 aa).

Positions 55, 60, 66, 81, 85, 88, and 292 each coordinate [4Fe-4S] cluster. Residues 67–281 enclose the Radical SAM core domain; that stretch reads WEDREATFLI…TQYAEGLGFS (215 aa).

It belongs to the radical SAM superfamily. Lipoyl synthase family. [4Fe-4S] cluster is required as a cofactor.

Its subcellular location is the cytoplasm. It carries out the reaction [[Fe-S] cluster scaffold protein carrying a second [4Fe-4S](2+) cluster] + N(6)-octanoyl-L-lysyl-[protein] + 2 oxidized [2Fe-2S]-[ferredoxin] + 2 S-adenosyl-L-methionine + 4 H(+) = [[Fe-S] cluster scaffold protein] + N(6)-[(R)-dihydrolipoyl]-L-lysyl-[protein] + 4 Fe(3+) + 2 hydrogen sulfide + 2 5'-deoxyadenosine + 2 L-methionine + 2 reduced [2Fe-2S]-[ferredoxin]. The protein operates within protein modification; protein lipoylation via endogenous pathway; protein N(6)-(lipoyl)lysine from octanoyl-[acyl-carrier-protein]: step 2/2. Its function is as follows. Catalyzes the radical-mediated insertion of two sulfur atoms into the C-6 and C-8 positions of the octanoyl moiety bound to the lipoyl domains of lipoate-dependent enzymes, thereby converting the octanoylated domains into lipoylated derivatives. The chain is Lipoyl synthase from Mycobacterium leprae (strain Br4923).